Reading from the N-terminus, the 119-residue chain is uncharacterized protein (119 aa).

The next 2 helical transmembrane spans lie at 53-73 (AATI…SFLA) and 92-112 (FITH…WFLF).

The protein localises to the membrane. This is an uncharacterized protein from Saccharomyces cerevisiae (strain ATCC 204508 / S288c) (Baker's yeast).